A 256-amino-acid polypeptide reads, in one-letter code: Ciliary microtubule associated protein 1A (256 aa).

STPGR repeat units follow at residues 66 to 92, 181 to 206, and 217 to 242; these read PGPG…IYGR, PGPG…MTAR, and PGPG…FGIR.

This sequence belongs to the CIMAP family.

The protein localises to the cytoplasm. Its subcellular location is the cytoskeleton. It localises to the flagellum axoneme. Its function is as follows. Outer dense fibers are filamentous structures located on the outside of the axoneme in the midpiece and principal piece of the mammalian sperm tail. May help to maintain the passive elastic structures and elastic recoil of the sperm tail. In Xenopus tropicalis (Western clawed frog), this protein is Ciliary microtubule associated protein 1A (cimap1a).